The primary structure comprises 391 residues: MSLNPRDVVIVDFGRTPMGRSKGGMHRNTRAEDMSAHLISKLLERNAKVDPAEVEDVIWGCVNQTLEQGWNIARMASLMTQIPHTSAGQTVSRLCGSSMSALHTAAQAIMTGNGDVFVVGGVEHMGHVSMMHGVDPNPHMSLYAAKASGMMGLTAEMLGKMHGITREQQDAFGVRSHQLAHKATVEGKFKDEIIPMQGYDENGFLKLFDYDETIRPETTLESLAALKPAFNPKGGTVTAGTSSQITDGASCMIVMSAQRAQDLGIQPMAVIRSMAVAGVDPAIMGYGPVPATQKALKRAGLGINDIDFFELNEAFAAQALPVLKDLKVLDKMNEKVNLHGGAIALGHPFGCSGARISGTLLNVMKQNGGTFGVSTMCIGLGQGISTVFERV.

Residue Cys-95 is the Acyl-thioester intermediate of the active site. Catalysis depends on proton acceptor residues His-347 and Cys-377.

The protein belongs to the thiolase-like superfamily. Thiolase family. Heterotetramer of two alpha chains (FadB) and two beta chains (FadA).

The protein resides in the cytoplasm. The catalysed reaction is an acyl-CoA + acetyl-CoA = a 3-oxoacyl-CoA + CoA. It participates in lipid metabolism; fatty acid beta-oxidation. Its function is as follows. Catalyzes the final step of fatty acid oxidation in which acetyl-CoA is released and the CoA ester of a fatty acid two carbons shorter is formed. In Pseudomonas fluorescens (strain ATCC BAA-477 / NRRL B-23932 / Pf-5), this protein is 3-ketoacyl-CoA thiolase.